The following is a 143-amino-acid chain: Large ribosomal subunit protein uL15 (143 aa).

Positions 1–57 (MQLNNLKPAAGSKHAKRRVGRGIGSGLGKTAGRGHKGQKSRSGGFHKVGFEGGQMPL) are disordered. The segment covering 21-31 (RGIGSGLGKTA) has biased composition (gly residues).

It belongs to the universal ribosomal protein uL15 family. Part of the 50S ribosomal subunit.

Functionally, binds to the 23S rRNA. This is Large ribosomal subunit protein uL15 from Ralstonia nicotianae (strain ATCC BAA-1114 / GMI1000) (Ralstonia solanacearum).